A 145-amino-acid polypeptide reads, in one-letter code: Large ribosomal subunit protein uL13 (145 aa).

The protein belongs to the universal ribosomal protein uL13 family. In terms of assembly, part of the 50S ribosomal subunit.

Functionally, this protein is one of the early assembly proteins of the 50S ribosomal subunit, although it is not seen to bind rRNA by itself. It is important during the early stages of 50S assembly. The sequence is that of Large ribosomal subunit protein uL13 from Bacillus cereus (strain ZK / E33L).